We begin with the raw amino-acid sequence, 368 residues long: 3-dehydroquinate synthase (368 aa).

NAD(+) is bound by residues 71–76 (DGESFK), 105–109 (GVIGD), 129–130 (TT), lysine 142, lysine 151, and 169–172 (TLRT). The Zn(2+) site is built by glutamate 184, histidine 247, and histidine 264.

Belongs to the sugar phosphate cyclases superfamily. Dehydroquinate synthase family. NAD(+) is required as a cofactor. It depends on Co(2+) as a cofactor. The cofactor is Zn(2+).

The protein resides in the cytoplasm. The catalysed reaction is 7-phospho-2-dehydro-3-deoxy-D-arabino-heptonate = 3-dehydroquinate + phosphate. The protein operates within metabolic intermediate biosynthesis; chorismate biosynthesis; chorismate from D-erythrose 4-phosphate and phosphoenolpyruvate: step 2/7. Functionally, catalyzes the conversion of 3-deoxy-D-arabino-heptulosonate 7-phosphate (DAHP) to dehydroquinate (DHQ). The protein is 3-dehydroquinate synthase of Ralstonia nicotianae (strain ATCC BAA-1114 / GMI1000) (Ralstonia solanacearum).